The primary structure comprises 453 residues: Allantoinase (453 aa).

Residues H59, H61, K146, H186, H242, and D315 each contribute to the Zn(2+) site. The residue at position 146 (K146) is an N6-carboxylysine.

It belongs to the metallo-dependent hydrolases superfamily. Allantoinase family. As to quaternary structure, homotetramer. Requires Zn(2+) as cofactor. Carboxylation allows a single lysine to coordinate two zinc ions.

The catalysed reaction is (S)-allantoin + H2O = allantoate + H(+). It participates in nitrogen metabolism; (S)-allantoin degradation; allantoate from (S)-allantoin: step 1/1. In terms of biological role, catalyzes the conversion of allantoin (5-ureidohydantoin) to allantoic acid by hydrolytic cleavage of the five-member hydantoin ring. The polypeptide is Allantoinase (Escherichia coli O9:H4 (strain HS)).